The chain runs to 165 residues: Chorismate pyruvate-lyase (165 aa).

Substrate-binding residues include methionine 35, arginine 77, leucine 115, and glutamate 156.

This sequence belongs to the UbiC family. In terms of assembly, monomer.

Its subcellular location is the cytoplasm. It carries out the reaction chorismate = 4-hydroxybenzoate + pyruvate. Its pathway is cofactor biosynthesis; ubiquinone biosynthesis. In terms of biological role, removes the pyruvyl group from chorismate, with concomitant aromatization of the ring, to provide 4-hydroxybenzoate (4HB) for the ubiquinone pathway. The sequence is that of Chorismate pyruvate-lyase from Shigella dysenteriae serotype 1 (strain Sd197).